Reading from the N-terminus, the 177-residue chain is Thymidine kinase (177 aa).

11 to 18 contacts ATP; that stretch reads GPMLSGKS. Glutamate 83 acts as the Proton acceptor in catalysis. A substrate-binding site is contributed by phenylalanine 113. 2 residues coordinate Zn(2+): cysteine 138 and cysteine 141. 157-161 is a substrate binding site; it reads IEIIG. 2 residues coordinate Zn(2+): cysteine 170 and cysteine 173.

This sequence belongs to the thymidine kinase family. In terms of assembly, homotetramer. Two molecules of substrate bind to each enzyme tetramer.

It catalyses the reaction thymidine + ATP = dTMP + ADP + H(+). In terms of biological role, phosphorylates thymidine and thymidine analogs, such as azidothymidine (AZT). Part of the salvage pathway for pyrimidine deoxyribonucleotide synthesis. In Monkeypox virus (strain Zaire-96-I-16) (MPX), this protein is Thymidine kinase (OPG101).